The primary structure comprises 100 residues: Large ribosomal subunit protein uL23 (100 aa).

It belongs to the universal ribosomal protein uL23 family. In terms of assembly, part of the 50S ribosomal subunit. Contacts protein L29, and trigger factor when it is bound to the ribosome.

One of the early assembly proteins it binds 23S rRNA. One of the proteins that surrounds the polypeptide exit tunnel on the outside of the ribosome. Forms the main docking site for trigger factor binding to the ribosome. This Lacticaseibacillus casei (strain BL23) (Lactobacillus casei) protein is Large ribosomal subunit protein uL23.